The primary structure comprises 968 residues: RNA polymerase-associated protein RapA (968 aa).

The Helicase ATP-binding domain occupies 164-334 (DVGRRHAPRV…FARLRLLDPN (171 aa)). 177 to 184 (DEVGLGKT) contributes to the ATP binding site. The DEAH box signature appears at 280 to 283 (DEAH). The Helicase C-terminal domain maps to 490–662 (RVEWLMGYLT…YLASPDETEG (173 aa)).

This sequence belongs to the SNF2/RAD54 helicase family. RapA subfamily. Interacts with the RNAP. Has a higher affinity for the core RNAP than for the holoenzyme. Its ATPase activity is stimulated by binding to RNAP.

Functionally, transcription regulator that activates transcription by stimulating RNA polymerase (RNAP) recycling in case of stress conditions such as supercoiled DNA or high salt concentrations. Probably acts by releasing the RNAP, when it is trapped or immobilized on tightly supercoiled DNA. Does not activate transcription on linear DNA. Probably not involved in DNA repair. The polypeptide is RNA polymerase-associated protein RapA (Escherichia coli O127:H6 (strain E2348/69 / EPEC)).